Here is a 209-residue protein sequence, read N- to C-terminus: Large ribosomal subunit protein uL4 (209 aa).

The disordered stretch occupies residues 46-72 (GTSSTKTRSEVRGSSKKPWKQKGTGRA). A compositionally biased stretch (basic residues) spans 59–72 (SSKKPWKQKGTGRA).

The protein belongs to the universal ribosomal protein uL4 family. In terms of assembly, part of the 50S ribosomal subunit.

In terms of biological role, one of the primary rRNA binding proteins, this protein initially binds near the 5'-end of the 23S rRNA. It is important during the early stages of 50S assembly. It makes multiple contacts with different domains of the 23S rRNA in the assembled 50S subunit and ribosome. Functionally, forms part of the polypeptide exit tunnel. This chain is Large ribosomal subunit protein uL4, found in Borreliella burgdorferi (strain ATCC 35210 / DSM 4680 / CIP 102532 / B31) (Borrelia burgdorferi).